We begin with the raw amino-acid sequence, 73 residues long: Small ribosomal subunit protein bS18 (73 aa).

This sequence belongs to the bacterial ribosomal protein bS18 family. Part of the 30S ribosomal subunit. Forms a tight heterodimer with protein bS6.

Binds as a heterodimer with protein bS6 to the central domain of the 16S rRNA, where it helps stabilize the platform of the 30S subunit. The protein is Small ribosomal subunit protein bS18 of Prochlorococcus marinus (strain NATL2A).